We begin with the raw amino-acid sequence, 381 residues long: Major structural protein ORF14 (381 aa).

The stretch at Arg287–Glu307 forms a coiled coil.

The polypeptide is Major structural protein ORF14 (Helicobacter pylori (strain 35A)).